The following is a 304-amino-acid chain: Acetylglutamate kinase (304 aa).

Substrate is bound by residues 82–83 (GG), arginine 104, and asparagine 197.

Belongs to the acetylglutamate kinase family. ArgB subfamily.

It is found in the cytoplasm. It carries out the reaction N-acetyl-L-glutamate + ATP = N-acetyl-L-glutamyl 5-phosphate + ADP. Its pathway is amino-acid biosynthesis; L-arginine biosynthesis; N(2)-acetyl-L-ornithine from L-glutamate: step 2/4. Functionally, catalyzes the ATP-dependent phosphorylation of N-acetyl-L-glutamate. The polypeptide is Acetylglutamate kinase (Prochlorococcus marinus (strain NATL1A)).